Here is a 432-residue protein sequence, read N- to C-terminus: Adenylosuccinate synthetase (432 aa).

GTP-binding positions include G11–K17 and G39–T41. D12 (proton acceptor) is an active-site residue. Mg(2+) is bound by residues D12 and G39. Residues D12–K15, N37–H40, T134, R148, N230, T245, and R309 each bind IMP. H40 serves as the catalytic Proton donor. Position 305-311 (V305–R311) interacts with substrate. GTP contacts are provided by residues R311, K337–D339, and G419–G421.

This sequence belongs to the adenylosuccinate synthetase family. As to quaternary structure, homodimer. It depends on Mg(2+) as a cofactor.

The protein resides in the cytoplasm. The catalysed reaction is IMP + L-aspartate + GTP = N(6)-(1,2-dicarboxyethyl)-AMP + GDP + phosphate + 2 H(+). It participates in purine metabolism; AMP biosynthesis via de novo pathway; AMP from IMP: step 1/2. Plays an important role in the de novo pathway and in the salvage pathway of purine nucleotide biosynthesis. Catalyzes the first committed step in the biosynthesis of AMP from IMP. The sequence is that of Adenylosuccinate synthetase from Kluyveromyces lactis (strain ATCC 8585 / CBS 2359 / DSM 70799 / NBRC 1267 / NRRL Y-1140 / WM37) (Yeast).